The sequence spans 67 residues: Cold shock protein ScoF (67 aa).

The CSD domain maps to 4-64; sequence GTVKWFNSEK…GQKGPQAENI (61 aa).

Its subcellular location is the cytoplasm. The chain is Cold shock protein ScoF (scoF) from Streptomyces coelicolor (strain ATCC BAA-471 / A3(2) / M145).